The primary structure comprises 181 residues: NAD(P)H-quinone oxidoreductase subunit I, chloroplastic (181 aa).

2 consecutive 4Fe-4S ferredoxin-type domains span residues 52 to 81 (GRIH…VDWE) and 92 to 121 (KSYS…MTEE). [4Fe-4S] cluster-binding residues include Cys61, Cys64, Cys67, Cys71, Cys101, Cys104, Cys107, and Cys111.

The protein belongs to the complex I 23 kDa subunit family. In terms of assembly, NDH is composed of at least 16 different subunits, 5 of which are encoded in the nucleus. Requires [4Fe-4S] cluster as cofactor.

It is found in the plastid. It localises to the chloroplast thylakoid membrane. The catalysed reaction is a plastoquinone + NADH + (n+1) H(+)(in) = a plastoquinol + NAD(+) + n H(+)(out). The enzyme catalyses a plastoquinone + NADPH + (n+1) H(+)(in) = a plastoquinol + NADP(+) + n H(+)(out). Its function is as follows. NDH shuttles electrons from NAD(P)H:plastoquinone, via FMN and iron-sulfur (Fe-S) centers, to quinones in the photosynthetic chain and possibly in a chloroplast respiratory chain. The immediate electron acceptor for the enzyme in this species is believed to be plastoquinone. Couples the redox reaction to proton translocation, and thus conserves the redox energy in a proton gradient. The sequence is that of NAD(P)H-quinone oxidoreductase subunit I, chloroplastic from Zygnema circumcarinatum (Green alga).